The following is a 446-amino-acid chain: Transcription factor Sox-10 (446 aa).

Disordered stretches follow at residues methionine 1 to glutamate 60, arginine 153 to glycine 191, and histidine 203 to glycine 264. Residues aspartate 36 to glutamate 48 are compositionally biased toward acidic residues. Lysine 52 is covalently cross-linked (Glycyl lysine isopeptide (Lys-Gly) (interchain with G-Cter in SUMO)). Residues aspartate 56–proline 96 form a dimerization (DIM) region. Positions valine 98–lysine 166 form a DNA-binding region, HMG box. Over residues arginine 153 to tyrosine 167 the composition is skewed to basic and acidic residues. Polar residues predominate over residues serine 213–glycine 226. A transactivation domain (TAM) region spans residues serine 217 to isoleucine 303. Residues serine 243 to glycine 257 show a composition bias toward basic and acidic residues. The transactivation domain (TAC) stretch occupies residues lysine 337–proline 446. Lysine 341 is covalently cross-linked (Glycyl lysine isopeptide (Lys-Gly) (interchain with G-Cter in SUMO)). Residues serine 421–proline 446 form a disordered region. Polar residues predominate over residues valine 426–proline 446.

Interacts with the sumoylation factors ube2i/ubc9 and sumo1. In terms of processing, sumoylated. In terms of tissue distribution, first expressed at stages 13/14 at the lateral edges of the neural plate, in the neural crest forming region. By stage 22, neural crest cells migrate in the cranial region and strong expression is seen in the crest cells that populate the branchial arches as well as those migrating in the frontonasal region. Also strongly expressed in the trunk neural crest. Expression in the otic vesicle begins around stage 25 and persists until at least stage 40. At stage 30, expression is down-regulated in the cranial neural crest of the pharyngeal arches but persists in the trunk neural crest, in the otic vesicle and in discrete domains adjacent to the hindbrain. At stage 40, expression is restricted to the otic vesicle, differentiated pigment cells, and in several cranial ganglia.

It localises to the cytoplasm. It is found in the nucleus. Its function is as follows. Acts early in neural crest formation, functioning redundantly with the other group E Sox factors sox8 and sox9 to induce neural crest progenitors. Acts downstream of wnt-signaling at the neural plate border. Involved in the specification of neural crest progenitors fated to form the pigment cell lineage. The sequence is that of Transcription factor Sox-10 (sox10) from Xenopus laevis (African clawed frog).